A 438-amino-acid chain; its full sequence is Serine hydroxymethyltransferase (438 aa).

Residues leucine 133 and 137–139 each bind (6S)-5,6,7,8-tetrahydrofolate; that span reads GHL. Lysine 242 carries the post-translational modification N6-(pyridoxal phosphate)lysine.

Belongs to the SHMT family. In terms of assembly, homodimer. The cofactor is pyridoxal 5'-phosphate.

It localises to the cytoplasm. It carries out the reaction (6R)-5,10-methylene-5,6,7,8-tetrahydrofolate + glycine + H2O = (6S)-5,6,7,8-tetrahydrofolate + L-serine. It participates in one-carbon metabolism; tetrahydrofolate interconversion. It functions in the pathway amino-acid biosynthesis; glycine biosynthesis; glycine from L-serine: step 1/1. Catalyzes the reversible interconversion of serine and glycine with tetrahydrofolate (THF) serving as the one-carbon carrier. This reaction serves as the major source of one-carbon groups required for the biosynthesis of purines, thymidylate, methionine, and other important biomolecules. Also exhibits THF-independent aldolase activity toward beta-hydroxyamino acids, producing glycine and aldehydes, via a retro-aldol mechanism. This is Serine hydroxymethyltransferase from Brucella canis (strain ATCC 23365 / NCTC 10854 / RM-666).